Consider the following 296-residue polypeptide: Small ribosomal subunit protein uS2m (296 aa).

Positions 274-296 (QGQKEPGDQGPAHPPGADMSHSL) are disordered.

This sequence belongs to the universal ribosomal protein uS2 family. In terms of assembly, component of the mitochondrial small ribosomal subunit (mt-SSU). Mature mammalian 55S mitochondrial ribosomes consist of a small (28S) and a large (39S) subunit. The 28S small subunit contains a 12S ribosomal RNA (12S mt-rRNA) and 30 different proteins. The 39S large subunit contains a 16S rRNA (16S mt-rRNA), a copy of mitochondrial valine transfer RNA (mt-tRNA(Val)), which plays an integral structural role, and 52 different proteins.

The protein resides in the mitochondrion. Its function is as follows. Required for mitoribosome formation and stability, and mitochondrial translation. In Homo sapiens (Human), this protein is Small ribosomal subunit protein uS2m (MRPS2).